The chain runs to 261 residues: Cytochrome c oxidase subunit 3 (261 aa).

Topologically, residues methionine 1–proline 15 are mitochondrial matrix. A helical membrane pass occupies residues tryptophan 16–tryptophan 34. Topologically, residues phenylalanine 35–leucine 40 are mitochondrial intermembrane. A helical transmembrane segment spans residues threonine 41–threonine 66. Over phenylalanine 67 to threonine 72 the chain is Mitochondrial matrix. A helical membrane pass occupies residues proline 73–serine 105. Residues leucine 106–glutamate 128 lie on the Mitochondrial intermembrane side of the membrane. The helical transmembrane segment at valine 129–methionine 152 threads the bilayer. The Mitochondrial matrix segment spans residues glutamate 153–glutamate 155. Residues arginine 156 to glutamate 183 form a helical membrane-spanning segment. Topologically, residues alanine 184 to aspartate 190 are mitochondrial intermembrane. The helical transmembrane segment at glycine 191 to valine 223 threads the bilayer. Residues glutamine 224–histidine 232 are Mitochondrial matrix-facing. A helical transmembrane segment spans residues phenylalanine 233 to isoleucine 256. Over tyrosine 257–serine 261 the chain is Mitochondrial intermembrane.

Belongs to the cytochrome c oxidase subunit 3 family. In terms of assembly, component of the cytochrome c oxidase (complex IV, CIV), a multisubunit enzyme composed of 14 subunits. The complex is composed of a catalytic core of 3 subunits MT-CO1, MT-CO2 and MT-CO3, encoded in the mitochondrial DNA, and 11 supernumerary subunits COX4I, COX5A, COX5B, COX6A, COX6B, COX6C, COX7A, COX7B, COX7C, COX8 and NDUFA4, which are encoded in the nuclear genome. The complex exists as a monomer or a dimer and forms supercomplexes (SCs) in the inner mitochondrial membrane with NADH-ubiquinone oxidoreductase (complex I, CI) and ubiquinol-cytochrome c oxidoreductase (cytochrome b-c1 complex, complex III, CIII), resulting in different assemblies (supercomplex SCI(1)III(2)IV(1) and megacomplex MCI(2)III(2)IV(2)).

The protein localises to the mitochondrion inner membrane. The enzyme catalyses 4 Fe(II)-[cytochrome c] + O2 + 8 H(+)(in) = 4 Fe(III)-[cytochrome c] + 2 H2O + 4 H(+)(out). Component of the cytochrome c oxidase, the last enzyme in the mitochondrial electron transport chain which drives oxidative phosphorylation. The respiratory chain contains 3 multisubunit complexes succinate dehydrogenase (complex II, CII), ubiquinol-cytochrome c oxidoreductase (cytochrome b-c1 complex, complex III, CIII) and cytochrome c oxidase (complex IV, CIV), that cooperate to transfer electrons derived from NADH and succinate to molecular oxygen, creating an electrochemical gradient over the inner membrane that drives transmembrane transport and the ATP synthase. Cytochrome c oxidase is the component of the respiratory chain that catalyzes the reduction of oxygen to water. Electrons originating from reduced cytochrome c in the intermembrane space (IMS) are transferred via the dinuclear copper A center (CU(A)) of subunit 2 and heme A of subunit 1 to the active site in subunit 1, a binuclear center (BNC) formed by heme A3 and copper B (CU(B)). The BNC reduces molecular oxygen to 2 water molecules using 4 electrons from cytochrome c in the IMS and 4 protons from the mitochondrial matrix. In Oncorhynchus masou (Cherry salmon), this protein is Cytochrome c oxidase subunit 3 (mt-co3).